We begin with the raw amino-acid sequence, 728 residues long: Prolyl 3-hydroxylase 1 (728 aa).

An N-terminal signal peptide occupies residues 1–14; the sequence is MVAVAAAAASRATA. 4 TPR repeats span residues 25–58, 135–168, 197–230, and 293–326; these read PDLLYAEGTAAYARGDWPGVVLNMERALRSRAAL, RSPYNYLQVAYFKINKLEKAVAAAHTFFVGNPEH, HMHEFRLGVRLYSEEKPLEAVPHLEAALQEYFVA, and PSHYNYLQFAYYNIGNYTQAIECAKTYLLFFPND. N-linked (GlcNAc...) asparagine glycosylation occurs at N308. Positions 393–431 form a coiled coil; the sequence is KRLQEKQKSERETAVRISQEIGNLMKEIETLVEEKTKES. N-linked (GlcNAc...) asparagine glycans are attached at residues N450, N459, and N532. The Fe2OG dioxygenase domain maps to 556–670; it reads SHLVCRTAIE…RCAIALWFTL (115 aa). Positions 579, 581, and 651 each coordinate Fe cation. R661 is an active-site residue. A disordered region spans residues 691 to 728; that stretch reads SPEEVDLPQEQPLPDQQGSPKPGEESLSDRESQPKDEL. Residues 698-707 show a composition bias toward low complexity; the sequence is PQEQPLPDQQ. A compositionally biased stretch (basic and acidic residues) spans 712 to 728; it reads PGEESLSDRESQPKDEL. The Prevents secretion from ER signature appears at 725–728; that stretch reads KDEL.

The protein belongs to the leprecan family. The cofactor is Fe cation. Requires L-ascorbate as cofactor. O-glycosylated; chondroitin sulfate. As to expression, expressed in basement membranes of cardiac muscle, skeletal muscle, central nervous system, intestinal tract, trachea, ear, skin, liver and kidney. In kidney, localizes to the glomerular basement membrane, mesangial matrix and Bowman's capsule of the nephron. In the renal parenchyma, expressed in the basement membranes of tubules and blood vessels. In the ear and trachea, localizes to the perimeter of resident chondrocytes in lacunae.

It is found in the endoplasmic reticulum. It localises to the secreted. The protein resides in the extracellular space. Its subcellular location is the extracellular matrix. It catalyses the reaction L-prolyl-[collagen] + 2-oxoglutarate + O2 = trans-3-hydroxy-L-prolyl-[collagen] + succinate + CO2. Functionally, basement membrane-associated chondroitin sulfate proteoglycan (CSPG). Has prolyl 3-hydroxylase activity catalyzing the post-translational formation of 3-hydroxyproline in -Xaa-Pro-Gly- sequences in collagens, especially types IV and V. May be involved in the secretory pathway of cells. Has growth suppressive activity in fibroblasts. This chain is Prolyl 3-hydroxylase 1, found in Rattus norvegicus (Rat).